The following is a 155-amino-acid chain: Ciliary microtubule inner protein 2C (155 aa).

The protein belongs to the CIMIP2 family.

Its subcellular location is the cytoplasm. The protein localises to the cytoskeleton. The protein resides in the cilium axoneme. Functionally, microtubule inner protein (MIP) part of the dynein-decorated doublet microtubules (DMTs) in cilia axoneme, which is required for motile cilia beating. In Xenopus laevis (African clawed frog), this protein is Ciliary microtubule inner protein 2C (cimip2ca).